A 210-amino-acid chain; its full sequence is Histone H1A (210 aa).

Disordered stretches follow at residues 1–49 (MAEA…VSEQ) and 101–210 (KGSG…PKKK). Composition is skewed to low complexity over residues 26–45 (KKAAAARGAAKSKKPSSGPS) and 129–142 (PLAAEAKKPAAAAK). In terms of domain architecture, H15 spans 42–113 (SGPSVSEQIV…GASGSFKLNK (72 aa)). 2 stretches are compositionally biased toward basic residues: residues 143–153 (KTAKSPKKPKK) and 160–180 (SPKKLKKPAKAAKSPAKKTAV). Positions 181–192 (KPKVAAKSPAKA) are enriched in low complexity. Residues 193 to 210 (KAAKPKVAKAKKAAPKKK) show a composition bias toward basic residues.

The protein belongs to the histone H1/H5 family.

The protein localises to the nucleus. The protein resides in the chromosome. In terms of biological role, histones H1 are necessary for the condensation of nucleosome chains into higher-order structures. In Xenopus laevis (African clawed frog), this protein is Histone H1A.